A 353-amino-acid chain; its full sequence is MAHRRIALAVLVTLLLSAFRPCLAQQSNDDTSKHHRSATAGGFTPTTVVVLVALITAFVLLTVFSVLINRCAQARAPPRRAFRSTASHQPVGGAAAASRASRGLDKEVVEAFPTAVYGDVKARMAAKSGPLECAVCLAEFADSDELRVLPACCHVFHPDCIDPWLAAAVTCPLCRANLTAPPVSLAAAESSDLTAPEEAVQEEESEELDEASLMATFTPESVIDFGATHDHEFDRAGYPHYRRTQSAMDAAPDRHTLRLPEHVMKELAADRRHRRAASLAGYPDSVERTPRWLTSLWRSVSWQRQSRADWDAGEEHGGSKRVHPVAGAQDETPSGSGSDGSKENSDSDALNRV.

A helical transmembrane segment spans residues valine 48 to isoleucine 68. An RING-type; atypical zinc finger spans residues cysteine 133–arginine 175. 2 stretches are compositionally biased toward basic and acidic residues: residues alanine 308–glycine 318 and glycine 340–valine 353. The segment at alanine 308 to valine 353 is disordered.

It is found in the membrane. The enzyme catalyses S-ubiquitinyl-[E2 ubiquitin-conjugating enzyme]-L-cysteine + [acceptor protein]-L-lysine = [E2 ubiquitin-conjugating enzyme]-L-cysteine + N(6)-ubiquitinyl-[acceptor protein]-L-lysine.. The protein operates within protein modification; protein ubiquitination. Possesses E3 ubiquitin-protein ligase in vitro. The protein is E3 ubiquitin-protein ligase Os03g0188200 of Oryza sativa subsp. japonica (Rice).